Here is a 267-residue protein sequence, read N- to C-terminus: Trehalose-phosphate phosphatase (267 aa).

The active-site Nucleophile is D20. The Mg(2+) site is built by D20, D22, and D198. Residue 20 to 22 (DLD) coordinates substrate.

It belongs to the trehalose phosphatase family. It depends on Mg(2+) as a cofactor.

It carries out the reaction alpha,alpha-trehalose 6-phosphate + H2O = alpha,alpha-trehalose + phosphate. It participates in glycan biosynthesis; trehalose biosynthesis. Its function is as follows. Removes the phosphate from trehalose 6-phosphate to produce free trehalose. The chain is Trehalose-phosphate phosphatase (otsB) from Salmonella typhimurium (strain LT2 / SGSC1412 / ATCC 700720).